A 135-amino-acid chain; its full sequence is Small ribosomal subunit protein uS12 (135 aa).

At Asp-89 the chain carries 3-methylthioaspartic acid. Positions 114-135 are disordered; it reads RSRYGAKKGAAKQAAAAKSKKK. Positions 124-135 are enriched in low complexity; it reads AKQAAAAKSKKK.

Belongs to the universal ribosomal protein uS12 family. In terms of assembly, part of the 30S ribosomal subunit. Contacts proteins S8 and S17. May interact with IF1 in the 30S initiation complex.

Its function is as follows. With S4 and S5 plays an important role in translational accuracy. In terms of biological role, interacts with and stabilizes bases of the 16S rRNA that are involved in tRNA selection in the A site and with the mRNA backbone. Located at the interface of the 30S and 50S subunits, it traverses the body of the 30S subunit contacting proteins on the other side and probably holding the rRNA structure together. The combined cluster of proteins S8, S12 and S17 appears to hold together the shoulder and platform of the 30S subunit. The protein is Small ribosomal subunit protein uS12 of Amoebophilus asiaticus (strain 5a2).